Reading from the N-terminus, the 368-residue chain is Large ribosomal subunit protein bL27m (368 aa).

A mitochondrion-targeting transit peptide spans 1-20 (MFSGLHTSKYACQVVVQIRT). Residues 23–44 (KRAAGSRTSMKDSAGRRLGPKK) form a disordered region. Over residues 31–44 (SMKDSAGRRLGPKK) the composition is skewed to basic and acidic residues.

This sequence belongs to the bacterial ribosomal protein bL27 family.

The protein resides in the mitochondrion. In terms of biological role, component of the large subunit of mitochondrial ribosome. This chain is Large ribosomal subunit protein bL27m (MRPL2), found in Candida glabrata (strain ATCC 2001 / BCRC 20586 / JCM 3761 / NBRC 0622 / NRRL Y-65 / CBS 138) (Yeast).